Consider the following 509-residue polypeptide: Putative thymidine phosphorylase (509 aa).

The protein belongs to the thymidine/pyrimidine-nucleoside phosphorylase family. Type 2 subfamily.

The catalysed reaction is thymidine + phosphate = 2-deoxy-alpha-D-ribose 1-phosphate + thymine. The sequence is that of Putative thymidine phosphorylase from Bradyrhizobium sp. (strain ORS 278).